The sequence spans 211 residues: MFRDGITIKGNKEGLNVIININSFKDFDEMLDAFIAKLSKGKRFYKGCTLRITTQLKEINERNTRKLKDILFDEFLIKDCIFEDSDENKSKVFSGIYEGRTKFLRRTVRSGQIIKYSGNVVIVGDVNPGSEIYAGGNVIVFGILRGDVHAGSTGNDKAIIAALRLQPKILQIANRISRAPEDDDKPDYPEVARLKGDAIIVEPYSPNKFNI.

This sequence belongs to the MinC family. In terms of assembly, interacts with MinD and FtsZ.

Cell division inhibitor that blocks the formation of polar Z ring septums. Rapidly oscillates between the poles of the cell to destabilize FtsZ filaments that have formed before they mature into polar Z rings. Prevents FtsZ polymerization. This chain is Probable septum site-determining protein MinC, found in Clostridium acetobutylicum (strain ATCC 824 / DSM 792 / JCM 1419 / IAM 19013 / LMG 5710 / NBRC 13948 / NRRL B-527 / VKM B-1787 / 2291 / W).